Consider the following 56-residue polypeptide: Preprotein translocase subunit SecG (56 aa).

Over 1–30 the chain is Cytoplasmic; that stretch reads MARKDKKTLPASGAGIVRYFNDDTAGVKLS. A helical transmembrane segment spans residues 31–52; sequence PKQVVIGTIIVALICIALRFTT. Residues 53 to 56 are Extracellular-facing; that stretch reads SVGY.

This sequence belongs to the SEC61-beta family. As to quaternary structure, component of the protein translocase complex. Heterotrimer consisting of alpha (SecY), beta (SecG) and gamma (SecE) subunits. Can form oligomers of the heterotrimer.

The protein localises to the cell membrane. In terms of biological role, involved in protein export. The function of the beta subunit is unknown, but it may be involved in stabilization of the trimeric complex. The protein is Preprotein translocase subunit SecG of Methanosphaera stadtmanae (strain ATCC 43021 / DSM 3091 / JCM 11832 / MCB-3).